We begin with the raw amino-acid sequence, 112 residues long: Mitochondrial import inner membrane translocase subunit TIM14-3 (112 aa).

At Ala2 the chain carries N-acetylalanine. Residues 6-28 (IAGAAVAAAAVAGRYGILAWQAF) form a helical membrane-spanning segment. Positions 53 to 112 (EAALILGVRESVVADKVKEAHRRVMVANHPDAGGSHYLASKINEAKDMMLGKSNNSGSAF) constitute a J domain.

It belongs to the TIM14 family. As to quaternary structure, probable component of the PAM complex at least composed of a mitochondrial HSP70 protein, TIMM44 and TIMM14. The complex interacts with the TIMM23 component of the TIM17:23 complex.

Its subcellular location is the mitochondrion. It localises to the mitochondrion inner membrane. Functionally, component of the PAM complex, a complex required for the translocation of transit peptide-containing proteins from the inner membrane into the mitochondrial matrix in an ATP-dependent manner. This chain is Mitochondrial import inner membrane translocase subunit TIM14-3 (TIM14-3), found in Arabidopsis thaliana (Mouse-ear cress).